We begin with the raw amino-acid sequence, 1013 residues long: Antigenic heat-stable 120 kDa protein (1013 aa).

Disordered regions lie at residues 1 to 73 (DTSE…TSDP) and 348 to 396 (GQSK…PQSQ). The segment covering 12 to 27 (EYTEEQKQKLEQEQKE) has biased composition (basic and acidic residues). The span at 47 to 61 (SASSAQSTPSISALS) shows a compositional bias: low complexity. Polar residues-rich tracts occupy residues 62 to 73 (GNISPDSQTSDP), 348 to 373 (GQSKEQPLITPQQTASSSVESPQYKQ), and 380 to 396 (PTNQPLQPETSQMPQSQ).

The protein resides in the cytoplasm. This is Antigenic heat-stable 120 kDa protein (sca4) from Rickettsia rhipicephali.